Here is a 516-residue protein sequence, read N- to C-terminus: Protein BTN1 (516 aa).

8 helical membrane-spanning segments follow: residues Leu24 to Ser44, Gly57 to Leu77, Val88 to Leu108, Leu112 to Leu132, Leu146 to Leu166, Gly169 to Thr189, Pro371 to Phe391, and Ser409 to Val429.

Belongs to the battenin family.

The protein resides in the vacuole membrane. Its function is as follows. Involved in vacuolar transport and vacuole pH homeostasis. Also required for cytokinesis. This Cryptococcus neoformans var. neoformans serotype D (strain JEC21 / ATCC MYA-565) (Filobasidiella neoformans) protein is Protein BTN1 (BTN1).